A 166-amino-acid chain; its full sequence is 2-C-methyl-D-erythritol 2,4-cyclodiphosphate synthase (166 aa).

A divalent metal cation-binding residues include Asp15 and His17. 4-CDP-2-C-methyl-D-erythritol 2-phosphate contacts are provided by residues 15–17 and 43–44; these read DIH and HS. Residue His51 coordinates a divalent metal cation. Residues 65-67, 141-144, and Arg151 contribute to the 4-CDP-2-C-methyl-D-erythritol 2-phosphate site; these read DIG and TTNE.

It belongs to the IspF family. Homotrimer. A divalent metal cation is required as a cofactor.

It carries out the reaction 4-CDP-2-C-methyl-D-erythritol 2-phosphate = 2-C-methyl-D-erythritol 2,4-cyclic diphosphate + CMP. It participates in isoprenoid biosynthesis; isopentenyl diphosphate biosynthesis via DXP pathway; isopentenyl diphosphate from 1-deoxy-D-xylulose 5-phosphate: step 4/6. Functionally, involved in the biosynthesis of isopentenyl diphosphate (IPP) and dimethylallyl diphosphate (DMAPP), two major building blocks of isoprenoid compounds. Catalyzes the conversion of 4-diphosphocytidyl-2-C-methyl-D-erythritol 2-phosphate (CDP-ME2P) to 2-C-methyl-D-erythritol 2,4-cyclodiphosphate (ME-CPP) with a corresponding release of cytidine 5-monophosphate (CMP). This is 2-C-methyl-D-erythritol 2,4-cyclodiphosphate synthase from Prochlorococcus marinus (strain MIT 9215).